The sequence spans 370 residues: Protein DVU_0535 (370 aa).

At 1–258 (MDRRRFLTLL…EELGTKSAPE (258 aa)) the chain is on the cytoplasmic side. 4Fe-4S ferredoxin-type domains follow at residues 40–70 (YGVLHDTTRCIGCRKCEQACNEVNKLPAPKA), 101–132 (DHPVFRKQQCNHCLEPACASACFVKAFTKNPD), and 133–162 (GSVTYDGSLCVGCRYCMVACPFNVPAFQYA). The [4Fe-4S] cluster site is built by cysteine 49, cysteine 52, cysteine 55, cysteine 59, cysteine 110, cysteine 113, cysteine 118, cysteine 122, cysteine 142, cysteine 145, cysteine 148, cysteine 152, cysteine 172, cysteine 175, cysteine 187, and cysteine 191. A helical transmembrane segment spans residues 259 to 284 (YTAGALGAVPMVVGIWPILLTGAYAI). Topologically, residues 285–370 (TKRKEKIAAE…DDAGKPGEDA (86 aa)) are periplasmic. Residues 345–355 (FEEELAAKEQP) are compositionally biased toward basic and acidic residues. The interval 345–370 (FEEELAAKEQPEAPEGDDAGKPGEDA) is disordered.

It is found in the cell membrane. Its function is as follows. HMWC (high-molecular-weight cytochrome c precursor), ORF2, ORF3, ORF4, ORF5, ORF6 in the HMC operon form a transmembrane protein complex that allows electron flow from the periplasmic hydrogenase to the cytoplasmic enzymes that catalyze reduction of sulfates. ORF2 is a transmembrane redox protein. The sequence is that of Protein DVU_0535 from Nitratidesulfovibrio vulgaris (strain ATCC 29579 / DSM 644 / CCUG 34227 / NCIMB 8303 / VKM B-1760 / Hildenborough) (Desulfovibrio vulgaris).